The primary structure comprises 553 residues: Coiled-coil domain-containing protein 22 homolog (553 aa).

The tract at residues 236 to 264 is disordered; the sequence is DSEEPAPPPISTVKPDASAEEEASPIQEL. Coiled coils occupy residues 261–286, 314–407, and 498–549; these read IQELSDQVEELRVQCETLLAERKAHA, ERTS…QSLA, and NVTK…VEQP.

The protein belongs to the CCDC22 family.

The polypeptide is Coiled-coil domain-containing protein 22 homolog (Drosophila erecta (Fruit fly)).